Reading from the N-terminus, the 309-residue chain is Small ribosomal subunit biogenesis GTPase RsgA (309 aa).

The 162-residue stretch at 64-225 folds into the CP-type G domain; that stretch reads ENELVRPPLA…VADTPGFSTY (162 aa). Residues 113-116 and 168-176 each bind GTP; these read SKTD and GQTGAGKST. 4 residues coordinate Zn(2+): cysteine 249, cysteine 254, histidine 256, and cysteine 262.

It belongs to the TRAFAC class YlqF/YawG GTPase family. RsgA subfamily. Monomer. Associates with 30S ribosomal subunit, binds 16S rRNA. The cofactor is Zn(2+).

It localises to the cytoplasm. One of several proteins that assist in the late maturation steps of the functional core of the 30S ribosomal subunit. Helps release RbfA from mature subunits. May play a role in the assembly of ribosomal proteins into the subunit. Circularly permuted GTPase that catalyzes slow GTP hydrolysis, GTPase activity is stimulated by the 30S ribosomal subunit. The sequence is that of Small ribosomal subunit biogenesis GTPase RsgA from Pediococcus pentosaceus (strain ATCC 25745 / CCUG 21536 / LMG 10740 / 183-1w).